Reading from the N-terminus, the 426-residue chain is Enolase (426 aa).

Gln-165 is a binding site for (2R)-2-phosphoglycerate. Glu-207 functions as the Proton donor in the catalytic mechanism. Mg(2+) is bound by residues Asp-244, Glu-285, and Asp-312. (2R)-2-phosphoglycerate-binding residues include Lys-337, Arg-366, Ser-367, and Lys-388. The active-site Proton acceptor is the Lys-337.

The protein belongs to the enolase family. Requires Mg(2+) as cofactor.

It localises to the cytoplasm. It is found in the secreted. The protein resides in the cell surface. It catalyses the reaction (2R)-2-phosphoglycerate = phosphoenolpyruvate + H2O. Its pathway is carbohydrate degradation; glycolysis; pyruvate from D-glyceraldehyde 3-phosphate: step 4/5. Catalyzes the reversible conversion of 2-phosphoglycerate (2-PG) into phosphoenolpyruvate (PEP). It is essential for the degradation of carbohydrates via glycolysis. This is Enolase from Cyanothece sp. (strain PCC 7425 / ATCC 29141).